The following is a 410-amino-acid chain: Multifunctional CCA protein (410 aa).

Residues G8 and R11 each contribute to the ATP site. G8 and R11 together coordinate CTP. Mg(2+) contacts are provided by E21 and D23. ATP-binding residues include R91, R137, and R140. CTP-binding residues include R91, R137, and R140. Residues 228–329 (TGVHVLSVLR…LELLQRFDVF (102 aa)) form the HD domain.

This sequence belongs to the tRNA nucleotidyltransferase/poly(A) polymerase family. Bacterial CCA-adding enzyme type 1 subfamily. As to quaternary structure, monomer. Can also form homodimers and oligomers. Mg(2+) serves as cofactor. Ni(2+) is required as a cofactor.

The catalysed reaction is a tRNA precursor + 2 CTP + ATP = a tRNA with a 3' CCA end + 3 diphosphate. The enzyme catalyses a tRNA with a 3' CCA end + 2 CTP + ATP = a tRNA with a 3' CCACCA end + 3 diphosphate. In terms of biological role, catalyzes the addition and repair of the essential 3'-terminal CCA sequence in tRNAs without using a nucleic acid template. Adds these three nucleotides in the order of C, C, and A to the tRNA nucleotide-73, using CTP and ATP as substrates and producing inorganic pyrophosphate. tRNA 3'-terminal CCA addition is required both for tRNA processing and repair. Also involved in tRNA surveillance by mediating tandem CCA addition to generate a CCACCA at the 3' terminus of unstable tRNAs. While stable tRNAs receive only 3'-terminal CCA, unstable tRNAs are marked with CCACCA and rapidly degraded. In Ectopseudomonas mendocina (strain ymp) (Pseudomonas mendocina), this protein is Multifunctional CCA protein.